The following is a 31-amino-acid chain: Relaxin B chain (31 aa).

Pyrrolidone carboxylic acid is present on Gln1.

This sequence belongs to the insulin family. In terms of assembly, heterodimer of a B chain and an A chain linked by two disulfide bonds.

Its subcellular location is the secreted. Relaxin is an ovarian hormone that acts with estrogen to produce dilatation of the birth canal in many mammals. The chain is Relaxin B chain from Phocoenoides dalli dalli (Dall's porpoise).